The following is a 384-amino-acid chain: Cytochrome b (384 aa).

The next 4 membrane-spanning stretches (helical) occupy residues Val-32–Met-52, Trp-76–Gly-98, Leu-113–Cys-133, and Phe-179–Met-199. 2 residues coordinate heme b: His-82 and His-96. Residues His-183 and His-197 each contribute to the heme b site. Residue His-202 coordinates a ubiquinone. Transmembrane regions (helical) follow at residues Phe-225–Phe-245, Leu-289–Asp-309, Leu-321–Gln-341, and Tyr-348–Pro-368.

The protein belongs to the cytochrome b family. As to quaternary structure, fungal cytochrome b-c1 complex contains 10 subunits; 3 respiratory subunits, 2 core proteins and 5 low-molecular weight proteins. Cytochrome b-c1 complex is a homodimer. It depends on heme b as a cofactor.

Its subcellular location is the mitochondrion inner membrane. In terms of biological role, component of the ubiquinol-cytochrome c reductase complex (complex III or cytochrome b-c1 complex) that is part of the mitochondrial respiratory chain. The b-c1 complex mediates electron transfer from ubiquinol to cytochrome c. Contributes to the generation of a proton gradient across the mitochondrial membrane that is then used for ATP synthesis. This is Cytochrome b (COB) from Candida parapsilosis (Yeast).